A 909-amino-acid polypeptide reads, in one-letter code: Myb-like protein Q (909 aa).

Disordered stretches follow at residues 15-65 (TTNN…QQQQ), 84-149 (QQQN…QQIL), and 216-280 (SAPS…KGPW). A compositionally biased stretch (low complexity) spans 17–46 (NNNSNNNNNNNNNNNNNNNNNNNNNINQNH). The segment covering 47–56 (QHQHQHHHHQ) has biased composition (basic residues). Residues 84–126 (QQQNYGESTTSTSMIPPSITTSLTPLTPTLSSQPQNIQQQQQQ) show a composition bias toward low complexity. The span at 127–139 (QHHHQQQHHHHHQ) shows a compositional bias: basic residues. Residues 216–226 (SAPSTPLSMSP) are compositionally biased toward polar residues. HTH myb-type domains follow at residues 272-327 (SPGI…SPEV) and 328-378 (RKTN…LKKI). 2 consecutive DNA-binding regions (H-T-H motif) follow at residues 300 to 323 (WSSI…FNHL) and 351 to 374 (WTAI…NSTL). Basic and acidic residues predominate over residues 379–389 (GGDSKSLNKEK). 5 disordered regions span residues 379–482 (GGDS…NTAI), 497–531 (QTTP…QTQQ), 616–642 (SMEQ…QQQQ), 672–748 (YQQQ…HPIE), and 826–855 (LNTT…IPTP). Residues 390–401 (DDDDDDDEDAED) show a composition bias toward acidic residues. 2 stretches are compositionally biased toward low complexity: residues 415 to 431 (SSSS…TNSS) and 444 to 482 (STTT…NTAI). A compositionally biased stretch (polar residues) spans 497-508 (QTTPNSSPSLSS). Low complexity-rich tracts occupy residues 622–642 (YQQQ…QQQQ), 672–726 (YQQQ…QQQQ), 733–744 (NSNNTDTTFSNS), and 826–851 (LNTT…NNNN).

The protein resides in the nucleus. In Dictyostelium discoideum (Social amoeba), this protein is Myb-like protein Q (mybQ).